The following is a 197-amino-acid chain: Holliday junction branch migration complex subunit RuvA (197 aa).

The segment at 1-63 is domain I; the sequence is MYAYLKGIIT…EDAHLLYGFR (63 aa). The interval 64-142 is domain II; that stretch reads SEDEKKLFLS…VAGDDLPAKI (79 aa). The interval 143 to 147 is flexible linker; it reads AVQAS. A domain III region spans residues 148-197; that stretch reads AENQELEEAMEAMLALGYKATELKKIKKFFEGTTDTAENYIKSALKMLVK.

Belongs to the RuvA family. As to quaternary structure, homotetramer. Forms an RuvA(8)-RuvB(12)-Holliday junction (HJ) complex. HJ DNA is sandwiched between 2 RuvA tetramers; dsDNA enters through RuvA and exits via RuvB. An RuvB hexamer assembles on each DNA strand where it exits the tetramer. Each RuvB hexamer is contacted by two RuvA subunits (via domain III) on 2 adjacent RuvB subunits; this complex drives branch migration. In the full resolvosome a probable DNA-RuvA(4)-RuvB(12)-RuvC(2) complex forms which resolves the HJ.

It is found in the cytoplasm. The RuvA-RuvB-RuvC complex processes Holliday junction (HJ) DNA during genetic recombination and DNA repair, while the RuvA-RuvB complex plays an important role in the rescue of blocked DNA replication forks via replication fork reversal (RFR). RuvA specifically binds to HJ cruciform DNA, conferring on it an open structure. The RuvB hexamer acts as an ATP-dependent pump, pulling dsDNA into and through the RuvAB complex. HJ branch migration allows RuvC to scan DNA until it finds its consensus sequence, where it cleaves and resolves the cruciform DNA. In Streptococcus pneumoniae (strain Taiwan19F-14), this protein is Holliday junction branch migration complex subunit RuvA.